Consider the following 404-residue polypeptide: MTKLTVKDLDLKGKKVLMRVDFNVPIKDGVIGNDNRVVAALPTIKYVLEQGGKAILFSHLGRIKKAEDKPGLSLAPVAKHLSDLLNQEVVFPGKTEGKELEDAIDKLKDGQVLMVENTRYEDVDANGEYVKRESGNDPELGKYWADLGDDLFVNDAFGTAHRSHASNVGIASNVSKTAAGFLMEKEIKYLDEAVNNPKRPFVAVLGGAKVSDKIEVIKNLLSKADKVIVGGGMSYTFSNAKGVKIGNSLFEADKVSLAKEIMKEAGDKLVLPEDSVAAESFANDVPTKVFENGIPDGWMGLDIGPKTIEKFKNTLKGAKTVVWNGPMGVFEMSNFANGTLELGKFIGSLTSEGAATIVGGGDSTAAVSQLGIADQFTHISTGGGASLEYLEGKTLPGIAAISDK.

Residues 21-23 (DFN), arginine 36, 59-62 (HLGR), arginine 119, and arginine 162 each bind substrate. Residues lysine 213, glycine 300, glutamate 331, and 360-363 (GGDS) contribute to the ATP site.

Belongs to the phosphoglycerate kinase family. In terms of assembly, monomer.

The protein localises to the cytoplasm. The enzyme catalyses (2R)-3-phosphoglycerate + ATP = (2R)-3-phospho-glyceroyl phosphate + ADP. It functions in the pathway carbohydrate degradation; glycolysis; pyruvate from D-glyceraldehyde 3-phosphate: step 2/5. The sequence is that of Phosphoglycerate kinase from Oenococcus oeni (strain ATCC BAA-331 / PSU-1).